The following is a 344-amino-acid chain: tRNA N6-adenosine threonylcarbamoyltransferase (344 aa).

Fe cation is bound by residues H114 and H118. Residues 136 to 140 (LVSGG), D170, G183, D187, and N278 each bind substrate. D306 contributes to the Fe cation binding site. The interval 325–344 (PSPLDVPSDPGLPVMQGQVR) is disordered.

The protein belongs to the KAE1 / TsaD family. Requires Fe(2+) as cofactor.

Its subcellular location is the cytoplasm. It catalyses the reaction L-threonylcarbamoyladenylate + adenosine(37) in tRNA = N(6)-L-threonylcarbamoyladenosine(37) in tRNA + AMP + H(+). Required for the formation of a threonylcarbamoyl group on adenosine at position 37 (t(6)A37) in tRNAs that read codons beginning with adenine. Is involved in the transfer of the threonylcarbamoyl moiety of threonylcarbamoyl-AMP (TC-AMP) to the N6 group of A37, together with TsaE and TsaB. TsaD likely plays a direct catalytic role in this reaction. This chain is tRNA N6-adenosine threonylcarbamoyltransferase, found in Mycobacterium tuberculosis (strain ATCC 25177 / H37Ra).